A 258-amino-acid chain; its full sequence is Venom plasminogen activator GPV-PA (258 aa).

The first 18 residues, 1–18 (MVLIRVLANLLILQLSYA), serve as a signal peptide directing secretion. Residues 19–24 (QKSSEL) constitute a propeptide that is removed on maturation. The 225-residue stretch at 25–249 (VFGGRPCNIN…YTDWIQSIIA (225 aa)) folds into the Peptidase S1 domain. 6 cysteine pairs are disulfide-bonded: Cys-31–Cys-163, Cys-50–Cys-66, Cys-98–Cys-256, Cys-142–Cys-210, Cys-174–Cys-189, and Cys-200–Cys-225. A glycan (N-linked (GlcNAc...) asparagine) is linked at Asn-44. Residues His-65 and Asp-110 each act as charge relay system in the active site. Asn-121 and Asn-185 each carry an N-linked (GlcNAc...) asparagine glycan. The active-site Charge relay system is Ser-204.

The protein belongs to the peptidase S1 family. Snake venom subfamily. As to quaternary structure, monomer. As to expression, expressed by the venom gland.

Its subcellular location is the secreted. Snake venom serine protease that activates plasminogen. The protein is Venom plasminogen activator GPV-PA of Trimeresurus albolabris (White-lipped pit viper).